Consider the following 264-residue polypeptide: Glutamate racemase (264 aa).

Residues 9-10 (DS) and 41-42 (YG) contribute to the substrate site. Cysteine 72 (proton donor/acceptor) is an active-site residue. 73 to 74 (NT) is a substrate binding site. Residue cysteine 183 is the Proton donor/acceptor of the active site. 184–185 (TH) is a binding site for substrate.

It belongs to the aspartate/glutamate racemases family.

The enzyme catalyses L-glutamate = D-glutamate. Its pathway is cell wall biogenesis; peptidoglycan biosynthesis. Provides the (R)-glutamate required for cell wall biosynthesis. The chain is Glutamate racemase from Geobacillus sp. (strain WCH70).